Reading from the N-terminus, the 274-residue chain is uncharacterized protein (274 aa).

The first 17 residues, 1-17, serve as a signal peptide directing secretion; that stretch reads MKKLLAGFLTLSLALAA. The N-palmitoyl cysteine moiety is linked to residue Cys-18. The S-diacylglycerol cysteine moiety is linked to residue Cys-18. The segment at 18–169 is disordered; it reads CSNGSDDDSS…DANNGASSAN (152 aa). The segment covering 25 to 76 has biased composition (basic and acidic residues); that stretch reads DSSKKDDSSKDNQSSDDKSKDSKNDDKKNNDSDKDKDNNSDSDKNSDSKSDD. The segment covering 91–169 has biased composition (low complexity); the sequence is SDNASGSDSS…DANNGASSAN (79 aa).

Its subcellular location is the cell membrane. This is an uncharacterized protein from Staphylococcus saprophyticus subsp. saprophyticus (strain ATCC 15305 / DSM 20229 / NCIMB 8711 / NCTC 7292 / S-41).